The chain runs to 353 residues: DNA polymerase IV (353 aa).

Positions 6–187 (IIHIDCDCFY…LPVTKLHGVG (182 aa)) constitute a UmuC domain. Positions 10 and 105 each coordinate Mg(2+). Residue Glu106 is part of the active site.

Belongs to the DNA polymerase type-Y family. As to quaternary structure, monomer. The cofactor is Mg(2+).

It localises to the cytoplasm. It catalyses the reaction DNA(n) + a 2'-deoxyribonucleoside 5'-triphosphate = DNA(n+1) + diphosphate. In terms of biological role, poorly processive, error-prone DNA polymerase involved in untargeted mutagenesis. Copies undamaged DNA at stalled replication forks, which arise in vivo from mismatched or misaligned primer ends. These misaligned primers can be extended by PolIV. Exhibits no 3'-5' exonuclease (proofreading) activity. May be involved in translesional synthesis, in conjunction with the beta clamp from PolIII. This Pseudomonas syringae pv. tomato (strain ATCC BAA-871 / DC3000) protein is DNA polymerase IV.